We begin with the raw amino-acid sequence, 190 residues long: Ribosome hibernation promotion factor (190 aa).

The protein belongs to the HPF/YfiA ribosome-associated protein family. Long HPF subfamily. Interacts with 100S ribosomes.

Its subcellular location is the cytoplasm. Functionally, required for dimerization of active 70S ribosomes into 100S ribosomes in stationary phase; 100S ribosomes are translationally inactive and sometimes present during exponential growth. The sequence is that of Ribosome hibernation promotion factor from Staphylococcus aureus (strain COL).